We begin with the raw amino-acid sequence, 344 residues long: N-acetyl-gamma-glutamyl-phosphate reductase (344 aa).

Cys148 is a catalytic residue.

This sequence belongs to the NAGSA dehydrogenase family. Type 1 subfamily.

It is found in the cytoplasm. It catalyses the reaction N-acetyl-L-glutamate 5-semialdehyde + phosphate + NADP(+) = N-acetyl-L-glutamyl 5-phosphate + NADPH + H(+). The protein operates within amino-acid biosynthesis; L-arginine biosynthesis; N(2)-acetyl-L-ornithine from L-glutamate: step 3/4. In terms of biological role, catalyzes the NADPH-dependent reduction of N-acetyl-5-glutamyl phosphate to yield N-acetyl-L-glutamate 5-semialdehyde. This is N-acetyl-gamma-glutamyl-phosphate reductase from Clostridium botulinum (strain Alaska E43 / Type E3).